Reading from the N-terminus, the 571-residue chain is Glutamate--tRNA ligase (571 aa).

The 'HIGH' region motif lies at 114–124 (PNPNGPWHVGH). Positions 431 to 453 (KPLAGGPESASPPLHPNDEDRGR) are disordered.

Belongs to the class-I aminoacyl-tRNA synthetase family. Glutamate--tRNA ligase type 2 subfamily.

The protein localises to the cytoplasm. The enzyme catalyses tRNA(Glu) + L-glutamate + ATP = L-glutamyl-tRNA(Glu) + AMP + diphosphate. Catalyzes the attachment of glutamate to tRNA(Glu) in a two-step reaction: glutamate is first activated by ATP to form Glu-AMP and then transferred to the acceptor end of tRNA(Glu). The polypeptide is Glutamate--tRNA ligase (Natronomonas pharaonis (strain ATCC 35678 / DSM 2160 / CIP 103997 / JCM 8858 / NBRC 14720 / NCIMB 2260 / Gabara) (Halobacterium pharaonis)).